The primary structure comprises 122 residues: Large ribosomal subunit protein uL18 (122 aa).

The tract at residues 1–25 (MSTLSRKQQTQKRHRRLRRHLSGTA) is disordered. Over residues 9–21 (QTQKRHRRLRRHL) the composition is skewed to basic residues.

This sequence belongs to the universal ribosomal protein uL18 family. As to quaternary structure, part of the 50S ribosomal subunit; part of the 5S rRNA/L5/L18/L25 subcomplex. Contacts the 5S and 23S rRNAs.

Functionally, this is one of the proteins that bind and probably mediate the attachment of the 5S RNA into the large ribosomal subunit, where it forms part of the central protuberance. The protein is Large ribosomal subunit protein uL18 of Synechococcus sp. (strain CC9311).